Reading from the N-terminus, the 293-residue chain is Ribosomal RNA small subunit methyltransferase H (293 aa).

Residues 32 to 34 (GGH), Asp51, Phe78, Asp99, and Gln106 each bind S-adenosyl-L-methionine. Positions 272–293 (SDEEIKENPASRSAKLRVGRRI) are disordered.

It belongs to the methyltransferase superfamily. RsmH family.

It is found in the cytoplasm. It carries out the reaction cytidine(1402) in 16S rRNA + S-adenosyl-L-methionine = N(4)-methylcytidine(1402) in 16S rRNA + S-adenosyl-L-homocysteine + H(+). In terms of biological role, specifically methylates the N4 position of cytidine in position 1402 (C1402) of 16S rRNA. The protein is Ribosomal RNA small subunit methyltransferase H of Sulfurihydrogenibium sp. (strain YO3AOP1).